A 202-amino-acid polypeptide reads, in one-letter code: LexA repressor (202 aa).

Residues 28–48 constitute a DNA-binding region (H-T-H motif); that stretch reads RAEIAQRLGFRSPNAAEEHLK. Catalysis depends on for autocatalytic cleavage activity residues Ser-119 and Lys-156.

This sequence belongs to the peptidase S24 family. In terms of assembly, homodimer.

The enzyme catalyses Hydrolysis of Ala-|-Gly bond in repressor LexA.. Represses a number of genes involved in the response to DNA damage (SOS response), including recA and lexA. Binds to the 16 bp palindromic sequence 5'-CTGTATATATATACAG-3'. In the presence of single-stranded DNA, RecA interacts with LexA causing an autocatalytic cleavage which disrupts the DNA-binding part of LexA, leading to derepression of the SOS regulon and eventually DNA repair. This Enterobacter sp. (strain 638) protein is LexA repressor.